Here is a 362-residue protein sequence, read N- to C-terminus: C-C chemokine receptor type 10 (362 aa).

Topologically, residues 1-52 are extracellular; sequence MGTEATEQVSWGHYSGDEEDAYSAEPLPELCYKADVQAFSRAFQPSVSLTVA. The chain crosses the membrane as a helical span at residues 53–68; the sequence is ALGLAGNGLVLATHLA. The Cytoplasmic segment spans residues 69-78; sequence ARRAARSPTS. Residues 79 to 99 traverse the membrane as a helical segment; it reads AHLLQLALADLLLALTLPFAA. Residues 100–114 are Extracellular-facing; that stretch reads AGALQGWSLGSATCR. The cysteines at positions 113 and 191 are disulfide-linked. A helical transmembrane segment spans residues 115–136; sequence TISGLYSASFHAGFLFLACISA. At 137–159 the chain is on the cytoplasmic side; that stretch reads DRYVAIARALPAGPRPSTPGRAH. A helical transmembrane segment spans residues 160–179; that stretch reads LVSVIVWLLSLLLALPALLF. Topologically, residues 180 to 203 are extracellular; it reads SQDGQREGQRRCRLIFPEGLTQTV. The helical transmembrane segment at 204–225 threads the bilayer; it reads KGASAVAQVALGFALPLGVMVA. Topologically, residues 226-247 are cytoplasmic; it reads CYALLGRTLLAARGPERRRALR. The chain crosses the membrane as a helical span at residues 248-269; it reads VVVALVAAFVVLQLPYSLALLL. Topologically, residues 270 to 290 are extracellular; it reads DTADLLAARERSCPASKRKDV. The chain crosses the membrane as a helical span at residues 291-313; that stretch reads ALLVTSGLALARCGLNPVLYAFL. Topologically, residues 314–362 are cytoplasmic; that stretch reads GLRFRQDLRRLLRGGSCPSGPQPRRGCPRRPRLSSCSAPTETHSLSWDN. Residues 328–338 are compositionally biased toward low complexity; sequence GSCPSGPQPRR. The tract at residues 328–362 is disordered; the sequence is GSCPSGPQPRRGCPRRPRLSSCSAPTETHSLSWDN. Positions 351 to 362 are enriched in polar residues; the sequence is APTETHSLSWDN.

The protein belongs to the G-protein coupled receptor 1 family. As to expression, expressed at high levels in adult testis, small intestine, fetal lung, fetal kidney. Weaker expression was observed in many other adult tissues including spleen, thymus, lymph node, Peyer patches, colon, heart, ovary, peripheral blood lymphocytes, thyroid and spinal cord. Also expressed by melanocytes, dermal fibroblasts, dermal microvascular endothelial cells. Also detected in T-cells and in skin-derived Langerhans cells.

The protein resides in the cell membrane. Receptor for chemokines SCYA27 and SCYA28. Subsequently transduces a signal by increasing the intracellular calcium ions level and stimulates chemotaxis in a pre-B cell line. The chain is C-C chemokine receptor type 10 (CCR10) from Homo sapiens (Human).